Reading from the N-terminus, the 1024-residue chain is Hemolysin, plasmid (1024 aa).

Polar residues predominate over residues 20–32; the sequence is AANKLHSAGQSTK. The tract at residues 20–39 is disordered; that stretch reads AANKLHSAGQSTKDALKKAA. The next 3 membrane-spanning stretches (helical) occupy residues 238 to 260, 268 to 327, and 365 to 411; these read IGAG…ILSN, KAAA…LSIA, and DASL…GILE. N6-myristoyl lysine attachment occurs at residues lysine 564 and lysine 690. Hemolysin-type calcium-binding repeat units follow at residues 732–749, 750–767, 768–785, 786–803, 816–833, and 834–851; these read FGSK…DDLI, EGND…NDTL, SGGN…NDKL, IGVA…DDEF, FGGK…ADLL, and DGGE…NDIY.

The protein belongs to the RTX prokaryotic toxin (TC 1.C.11) family. In terms of processing, myristoylated by HlyC; the toxin only becomes active when modified. Mainly myristoylated, while a minor fraction is acylated with pentadecanoyl (C15:0; 26%) and heptadecanoyl (C17:0; 6%) fatty acyl groups. Fatty acylation is involved in binding to host membranes and promotes the irreversible insertion of Hemolysin into the host cell membrane. Can be activated by both myristoylation and palmitoylation, but HlyC catalyzes lysine myristoylation.

Its subcellular location is the secreted. It localises to the host cell membrane. In terms of biological role, bacterial hemolysins are exotoxins that attack blood cell membranes and cause cell rupture by forming a pore. This is Hemolysin, plasmid from Escherichia coli.